Reading from the N-terminus, the 77-residue chain is Translation initiation factor IF-1, chloroplastic (77 aa).

In terms of domain architecture, S1-like spans methionine 1–arginine 72.

The protein belongs to the IF-1 family. As to quaternary structure, component of the 30S ribosomal translation pre-initiation complex which assembles on the 30S ribosome in the order IF-2 and IF-3, IF-1 and N-formylmethionyl-tRNA(fMet); mRNA recruitment can occur at any time during PIC assembly.

It is found in the plastid. The protein localises to the chloroplast. Its function is as follows. One of the essential components for the initiation of protein synthesis. Stabilizes the binding of IF-2 and IF-3 on the 30S subunit to which N-formylmethionyl-tRNA(fMet) subsequently binds. Helps modulate mRNA selection, yielding the 30S pre-initiation complex (PIC). Upon addition of the 50S ribosomal subunit IF-1, IF-2 and IF-3 are released leaving the mature 70S translation initiation complex. This chain is Translation initiation factor IF-1, chloroplastic, found in Staurastrum punctulatum (Green alga).